We begin with the raw amino-acid sequence, 63 residues long: Bowman-Birk type proteinase inhibitor (63 aa).

7 cysteine pairs are disulfide-bonded: Cys8–Cys61, Cys9–Cys24, Cys12–Cys57, Cys14–Cys22, Cys31–Cys38, Cys35–Cys50, and Cys40–Cys48.

The protein belongs to the Bowman-Birk serine protease inhibitor family.

This inhibitor has two domains, each with separate antiprotease activity. Inhibits bovine trypsin and chymotrypsin, in a molar ratio of 1:1. The trypsin inhibition of FBI is independent of chymotrypsin inhibition, but the chymotrypsin inhibition is not completely independent of trypsin inhibition. In Vicia faba (Broad bean), this protein is Bowman-Birk type proteinase inhibitor.